Consider the following 253-residue polypeptide: Aminoglycoside nucleotidyltransferase (4') (253 aa).

The tract at residues 1 to 127 (MNGPIIMTRE…KVYQTAKSVE (127 aa)) is N-terminal domain. Positions 39, 42, 49, 50, and 52 each coordinate ATP. Residues D50 and E52 each contribute to the Mg(2+) site. Residues E52 and E67 each contribute to the neomycin B site. E67, K74, E76, E141, and E145 together coordinate kanamycin A. Positions 128 to 241 (AQTFHDAICA…NGIQEWTERH (114 aa)) are C-terminal domain. ATP-binding residues include E145, K149, and T187. E145 contacts Mg(2+). The active-site Proton acceptor is the E145.

In terms of assembly, homodimer. The cofactor is Mg(2+).

The catalysed reaction is amikacin + ATP = 4'-adenylylamikacin + diphosphate. It carries out the reaction kanamycin A + ATP = 4'-adenylylkanamycin A + diphosphate. The enzyme catalyses neomycin B + ATP = 4'-adenylylneomycin B + diphosphate. It catalyses the reaction paromomycin + ATP = 4'-adenylylparomomycin + diphosphate. The catalysed reaction is ribostamycin + ATP = 4'-adenylylribostamycin + diphosphate. It carries out the reaction tobramycin + ATP = 4'-adenylyltobramycin + diphosphate. The enzyme catalyses kanamycin A + CTP = 4'-cytidylylkanamycin A + diphosphate. It catalyses the reaction kanamycin A + GTP = 4'-guanylylkanamycin A + diphosphate. The catalysed reaction is kanamycin A + ITP = 4'-inosinylylkanamycin A + diphosphate. It carries out the reaction dTTP + kanamycin A = 4'-thymidylylkanamycin A + diphosphate. The enzyme catalyses kanamycin A + UTP = 4'-uridylylkanamycin A + diphosphate. It catalyses the reaction kanamycin A + dATP = 4'-(2'-deoxyadenylyl)kanamycin A + diphosphate. The catalysed reaction is kanamycin A + dCTP = 4'-(2'-deoxycytidylyl)kanamycin A + diphosphate. It carries out the reaction kanamycin A + dGTP = 4'-(2'-deoxyguanylyl)kanamycin A + diphosphate. The enzyme catalyses dUTP + kanamycin A = 4'-(2'-deoxyuridylyl)kanamycin A + diphosphate. It catalyses the reaction amikacin + GTP = 4'-guanylylamikacin + diphosphate. The catalysed reaction is amikacin + ITP = 4'-inosinylylamikacin + diphosphate. It carries out the reaction amikacin + CTP = 4'-cytidylylamikacin + diphosphate. The enzyme catalyses amikacin + UTP = 4'-uridylylamikacin + diphosphate. It catalyses the reaction amikacin + dTTP = 4'-thymidylylamikacin + diphosphate. Functionally, inactivates aminoglycoside antibiotics such as kanamycin by catalyzing the transfer of a nucleotidyl group from a wide variety of nucleoside triphosphates ((d)ATP, (d)CTP, (d)GTP, ITP, TTP and (d)UTP) to the 4'-hydroxyl group of the aminoglycoside. In vitro, antibiotics without the 4'-hydroxyl but possessing a 4''-hydroxyl group (e.g. sisomicin and gentamicin) are also modifed but with poor specificity. The 3' position of the NTP ribose ring does not tolerate large substitutions (e.g. ddATP) and dNTPs and TTP are better substrates than their NTP counterparts. A short (2.35 Angstrom) hydrogen bond initially facilitates tight binding of the substrate (between Glu-52 and antibiotic) that is subsequently disrupted by the assembly of the active ternary complex. This enables the release of products post-catalysis, a 'catch and release' mechanism. The sequence is that of Aminoglycoside nucleotidyltransferase (4') (knt) from Staphylococcus aureus.